Consider the following 80-residue polypeptide: Small pacifastin protease inhibitor (80 aa).

Residues 1–24 (MSKVLKVGLLLLLVAVAASAYAVA) form the signal peptide. Positions 25–47 (EENGAPKENKQLPQIDDYGVTNK) are excised as a propeptide. Residues 45-80 (TNKCPANQPFKWNCNYCTCGPEGKDASCTRMACPQH) enclose the Pacifastin domain. Intrachain disulfides connect Cys-48–Cys-63, Cys-58–Cys-77, and Cys-61–Cys-72.

Belongs to the protease inhibitor I19 family. In terms of tissue distribution, expressed in the venom apparatus. Low transcript levels are also detected in other tissues.

The protein localises to the secreted. Its function is as follows. Parasitic wasp protein that may interfere with the host immune response. The recombinant protein inhibits trypsin activity and prophenoloxidase (PPO) activation, an enzyme essential for both clotting and insect innate immune responses. It does not inhibit activity of chymotrypsin and protease K, and has no effect on phenoloxidase (PO) activity. The protein is Small pacifastin protease inhibitor of Nasonia vitripennis (Parasitic wasp).